A 132-amino-acid polypeptide reads, in one-letter code: MVMTDPIADMLTRIRNANMVRHEKLEMPASTIKREVAEILKREGFIRDVEYLEDSKQGTLRVFLKYGASNERVITGLKRISKPGLRVYAKADEIPKVLGGLGIAIVSTSKGVMTDKEARQQKVGGEVIAYIW.

This sequence belongs to the universal ribosomal protein uS8 family. Part of the 30S ribosomal subunit. Contacts proteins S5 and S12.

Its function is as follows. One of the primary rRNA binding proteins, it binds directly to 16S rRNA central domain where it helps coordinate assembly of the platform of the 30S subunit. This chain is Small ribosomal subunit protein uS8, found in Exiguobacterium sibiricum (strain DSM 17290 / CCUG 55495 / CIP 109462 / JCM 13490 / 255-15).